We begin with the raw amino-acid sequence, 476 residues long: MNFYSPPTLMELARQCLLRDEYLAISALKDLPNMMFPVMFKEAFIDGHTKILTAMIPVWPFPYLSVGTMLKNLNLDTLKAVLEEIDILISKPVFSSRCKLREITLSHDLVVVWAGSHEVEGLPEFMEQEKPVENSPGYGTKNKLKVTTELQFMEGHLDECSTYLLQWAYQREDSIHLHCRKLKIYGLTKAAVIEMFKIVHAEYIEDLELSCLCLEYLDFLNPYLKQMSNLLSLTLDEIIYTLNIDDYRNLNEEKVITVISHLPTFHHLQELYVHGVIFIECLRCLKKPLEVLSFTDCDLSQSDLDYLPYCLNIFELRSLHLTDVRLSNLLLEPLGFLLERVRHTLKSLQLMSCEMGETHFNALLPALSQCYQLTVVNFYGNELSLLFLKKLLHHTAKLSQLADELYPAPQECYDNRDVVLSHRLENFCSELLDILRAIREPKKVTFGTIKCSKCGGSYVYDLETQCCFFEKNPPWA.

The LRR 1; degenerate repeat unit spans residues 97-121 (RCKLREITLSHDLVVVWAGSHEVEG). The LRR 2; degenerate repeat unit spans residues 176-200 (HLHCRKLKIYGLTKAAVIEMFKIVH). The LRR 3; degenerate repeat unit spans residues 201 to 226 (AEYIEDLELSCLCLEYLDFLNPYLKQ). The stretch at 227–264 (MSNLLSLTLDEIIYTLNIDDYRNLNEEKVITVISHLPT) is one LRR 4; degenerate repeat. LRR repeat units lie at residues 265 to 285 (FHHL…LRCL), 286 to 317 (KKPL…FELR), 342 to 369 (RHTL…ALSQ), and 370 to 394 (CYQL…LLHH).

Belongs to the PRAME family. Expressed in ovary, specifically in oocytes. Detected in follicles with two layers of granulosa cells, and are present in early as well as large antral follicles.

The polypeptide is Oogenesin-2 (Mus musculus (Mouse)).